We begin with the raw amino-acid sequence, 1468 residues long: Potassium channel K2 (1468 aa).

Helical transmembrane passes span 48 to 68, 146 to 165, 185 to 209, 221 to 240, 246 to 264, and 285 to 306; these read MIYI…YWIY, FNCY…WYIS, IYIY…IISY, LLID…RHFF, IDIY…FLNV, and IILG…IQGI. The pore-forming intramembrane region spans 326–344; sequence YFYFSIISISTVGYGDIIP. A helical membrane pass occupies residues 351-368; that stretch reads VICIFFIFWTFIWVPIQF. The disordered stretch occupies residues 804-823; that stretch reads TCARTNESHKNNRLRSRRSQ. Positions 814–823 are enriched in basic residues; the sequence is NNRLRSRRSQ. Positions 1141–1185 form a coiled coil; it reads KSNKNSNNNNKCEQIKQLNNNLTFKKNEKKTKSNKQNTNDTLERR.

The protein localises to the membrane. In terms of biological role, may be involved in transmembrane potassium transport at the subcellular level not affecting bulk potassium transport across the plasma membrane. This is Potassium channel K2 from Plasmodium berghei (strain Anka).